The chain runs to 313 residues: MIFSTLEHILTHISFSIVSIVITIHLITFLVDEIVKLYDSSEKGIIVTFFCITGLLVTRWVSSGHFPLSDLYESLIFLSWSFSLIHIIPYFKKNVLILSKITGPSAILTQGFATSGILTEIHQSGILVPALQSEWLIMHVSMMILGYAALLCGSLLSVALLVITFRKNRKLFSKSNVFLNESFFLGENVVENTSFFCTKNYYRSQLIQQLDYWSYRVISLGFTFLTIGILSGAVWANEAWGSYWNWDPKETWAFITWIVFAIYLHTRTNRNLRGPNSAIVASIGFLIIWICYFGVNLLGIGLHSYGSFPSTFN.

Transmembrane regions (helical) follow at residues 9-29 (ILTH…LITF), 44-64 (GIIV…VSSG), 71-91 (LYES…IPYF), 111-131 (GFAT…VPAL), 143-163 (MILG…LLVI), 217-237 (VISL…VWAN), 244-264 (WNWD…AIYL), and 278-298 (AIVA…VNLL).

The protein belongs to the CcmF/CycK/Ccl1/NrfE/CcsA family. As to quaternary structure, may interact with Ccs1.

The protein localises to the plastid. It localises to the chloroplast thylakoid membrane. In terms of biological role, required during biogenesis of c-type cytochromes (cytochrome c6 and cytochrome f) at the step of heme attachment. The protein is Cytochrome c biogenesis protein CcsA of Solanum lycopersicum (Tomato).